A 587-amino-acid polypeptide reads, in one-letter code: UDP-N-acetylmuramoylalanine--D-glutamate ligase (587 aa).

The interval 124-147 (DHLVPPESPLSDASDISDASDATD) is disordered. Over residues 132-147 (PLSDASDISDASDATD) the composition is skewed to low complexity. 214 to 220 (GTNGKTT) is a binding site for ATP.

The protein belongs to the MurCDEF family.

The protein localises to the cytoplasm. The catalysed reaction is UDP-N-acetyl-alpha-D-muramoyl-L-alanine + D-glutamate + ATP = UDP-N-acetyl-alpha-D-muramoyl-L-alanyl-D-glutamate + ADP + phosphate + H(+). Its pathway is cell wall biogenesis; peptidoglycan biosynthesis. Its function is as follows. Cell wall formation. Catalyzes the addition of glutamate to the nucleotide precursor UDP-N-acetylmuramoyl-L-alanine (UMA). The sequence is that of UDP-N-acetylmuramoylalanine--D-glutamate ligase from Polaromonas sp. (strain JS666 / ATCC BAA-500).